Consider the following 350-residue polypeptide: METNSSLPTNISGGTPAVSAGYLFLDIITYLVFAVTFVLGVLGNGLVIWVAGFRMTHTVTTISYLNLAVADFCFTSTLPFFMVRKAMGGHWPFGWFLCKFVFTIVDINLFGSVFLIALIALDRCVCVLHPVWTQNHRTVSLAKKVIIGPWVMALLLTLPVIIRVTTVPGKTGTVACTFNFSPWTNDPKERINVAVAMLTVRGIIRFIIGFSAPMSIVAVSYGLIATKIHKQGLIKSSRPLRVLSFVAAAFFLCWSPYQVVALIATVRIRELLQGMYKEIGIAVDVTSALAFFNSCLNPMLYVFMGQDFRERLIHALPASLERALTEDSTQTSDTATNSTLPSAEVELQAK.

Residues 1–27 (METNSSLPTNISGGTPAVSAGYLFLDI) are Extracellular-facing. N4 and N10 each carry an N-linked (GlcNAc...) asparagine glycan. Residues 28-50 (ITYLVFAVTFVLGVLGNGLVIWV) form a helical membrane-spanning segment. Over 51–61 (AGFRMTHTVTT) the chain is Cytoplasmic. The helical transmembrane segment at 62-83 (ISYLNLAVADFCFTSTLPFFMV) threads the bilayer. At 84–100 (RKAMGGHWPFGWFLCKF) the chain is on the extracellular side. The cysteines at positions 98 and 176 are disulfide-linked. Residues 101–121 (VFTIVDINLFGSVFLIALIAL) form a helical membrane-spanning segment. Residues 122 to 140 (DRCVCVLHPVWTQNHRTVS) lie on the Cytoplasmic side of the membrane. A helical membrane pass occupies residues 141–162 (LAKKVIIGPWVMALLLTLPVII). Topologically, residues 163 to 205 (RVTTVPGKTGTVACTFNFSPWTNDPKERINVAVAMLTVRGIIR) are extracellular. The helical transmembrane segment at 206-226 (FIIGFSAPMSIVAVSYGLIAT) threads the bilayer. The Cytoplasmic segment spans residues 227–242 (KIHKQGLIKSSRPLRV). The chain crosses the membrane as a helical span at residues 243–266 (LSFVAAAFFLCWSPYQVVALIATV). The Extracellular portion of the chain corresponds to 267-285 (RIRELLQGMYKEIGIAVDV). A helical transmembrane segment spans residues 286–305 (TSALAFFNSCLNPMLYVFMG). Residues 306–350 (QDFRERLIHALPASLERALTEDSTQTSDTATNSTLPSAEVELQAK) lie on the Cytoplasmic side of the membrane. Residues 325 to 350 (TEDSTQTSDTATNSTLPSAEVELQAK) form a disordered region. The segment covering 326-341 (EDSTQTSDTATNSTLP) has biased composition (polar residues). S328 is modified (phosphoserine). T329 and T331 each carry phosphothreonine. The residue at position 332 (S332) is a Phosphoserine. Residues T334 and T336 each carry the phosphothreonine modification. S338 is modified (phosphoserine). At T339 the chain carries Phosphothreonine.

The protein belongs to the G-protein coupled receptor 1 family. As to quaternary structure, interacts with S.aureus chemotaxis inhibitory protein (CHIPS); the interaction blocks the receptor and may thus inhibit the immune response. In terms of processing, phosphorylated; which is necessary for desensitization. As to expression, neutrophils.

The protein localises to the cell membrane. Functionally, high affinity receptor for N-formyl-methionyl peptides (fMLP), which are powerful neutrophil chemotactic factors. Binding of fMLP to the receptor stimulates intracellular calcium mobilization and superoxide anion release. This response is mediated via a G-protein that activates a phosphatidylinositol-calcium second messenger system. Receptor for TAFA4, mediates its effects on chemoattracting macrophages, promoting phagocytosis and increasing ROS release. Receptor for cathepsin CTSG, leading to increased phagocyte chemotaxis. The polypeptide is fMet-Leu-Phe receptor (FPR1) (Homo sapiens (Human)).